Here is a 238-residue protein sequence, read N- to C-terminus: tRNA (guanine-N(7)-)-methyltransferase (238 aa).

4 residues coordinate S-adenosyl-L-methionine: Glu-68, Glu-93, Asp-120, and Asp-143. Residue Asp-143 is part of the active site. Substrate-binding positions include Lys-147, Asp-179, and 216 to 219 (TKFE).

It belongs to the class I-like SAM-binding methyltransferase superfamily. TrmB family.

It carries out the reaction guanosine(46) in tRNA + S-adenosyl-L-methionine = N(7)-methylguanosine(46) in tRNA + S-adenosyl-L-homocysteine. The protein operates within tRNA modification; N(7)-methylguanine-tRNA biosynthesis. Its function is as follows. Catalyzes the formation of N(7)-methylguanine at position 46 (m7G46) in tRNA. The chain is tRNA (guanine-N(7)-)-methyltransferase from Shewanella baltica (strain OS155 / ATCC BAA-1091).